The sequence spans 150 residues: Classical arabinogalactan protein 6 (150 aa).

The signal sequence occupies residues 1–20; that stretch reads MARQFVVLVLLTLTIATAFA. Composition is skewed to low complexity over residues 19 to 75 and 85 to 98; these read FAAD…SPAA and SASS…APTV. Residues 19-131 form a disordered region; it reads FAADAPSASP…ESPKSGAVTT (113 aa). S126 carries the GPI-anchor amidated serine lipid modification. Positions 127-150 are cleaved as a propeptide — removed in mature form; the sequence is GAVTTAKFSVVGTVATVGFFFFSF.

Belongs to the classical AGP family. Post-translationally, O-glycosylated on the hydroxyproline residues. Expressed in the anthers.

The protein localises to the cell membrane. Functionally, proteoglycan that seems to be implicated in diverse developmental roles such as differentiation, cell-cell recognition, embryogenesis and programmed cell death. Plays an important role during the formation of the nexine layer of the pollen wall. The protein is Classical arabinogalactan protein 6 (AGP6) of Arabidopsis thaliana (Mouse-ear cress).